A 360-amino-acid polypeptide reads, in one-letter code: Phospho-N-acetylmuramoyl-pentapeptide-transferase (360 aa).

A run of 10 helical transmembrane segments spans residues 25 to 45, 73 to 93, 94 to 114, 134 to 154, 173 to 193, 198 to 218, 240 to 260, 262 to 282, 287 to 307, and 337 to 357; these read RTIY…PWLI, TMGG…WADL, TNAY…IGFV, FCLQ…GLNG, PGYV…VNLT, GLAI…AYVA, VFCG…AYPA, IFMG…VAIL, LALV…ILQV, and KVIV…VSTL.

This sequence belongs to the glycosyltransferase 4 family. MraY subfamily. Mg(2+) serves as cofactor.

It is found in the cell inner membrane. It carries out the reaction UDP-N-acetyl-alpha-D-muramoyl-L-alanyl-gamma-D-glutamyl-meso-2,6-diaminopimeloyl-D-alanyl-D-alanine + di-trans,octa-cis-undecaprenyl phosphate = di-trans,octa-cis-undecaprenyl diphospho-N-acetyl-alpha-D-muramoyl-L-alanyl-D-glutamyl-meso-2,6-diaminopimeloyl-D-alanyl-D-alanine + UMP. It functions in the pathway cell wall biogenesis; peptidoglycan biosynthesis. Functionally, catalyzes the initial step of the lipid cycle reactions in the biosynthesis of the cell wall peptidoglycan: transfers peptidoglycan precursor phospho-MurNAc-pentapeptide from UDP-MurNAc-pentapeptide onto the lipid carrier undecaprenyl phosphate, yielding undecaprenyl-pyrophosphoryl-MurNAc-pentapeptide, known as lipid I. The sequence is that of Phospho-N-acetylmuramoyl-pentapeptide-transferase from Desulfatibacillum aliphaticivorans.